The chain runs to 233 residues: uncharacterized protein (233 aa).

This is an uncharacterized protein from Methanocaldococcus jannaschii (strain ATCC 43067 / DSM 2661 / JAL-1 / JCM 10045 / NBRC 100440) (Methanococcus jannaschii).